Reading from the N-terminus, the 539-residue chain is Lysophospholipid acyltransferase LPEAT2 (539 aa).

A helical transmembrane segment spans residues 93–113; that stretch reads LVICLPIALIRLVLFAASLAV. The HXXXXD motif motif lies at 178-183; sequence HVSYIE. 3 consecutive EF-hand domains span residues 426–455, 457–492, and 493–528; these read KRIF…VLTQ, LFKQ…TIPN, and LNKD…NPLL. Asp-470, Asp-472, Asp-474, Tyr-476, Glu-481, Asp-506, Asp-508, Asp-510, Arg-512, and Asp-517 together coordinate Ca(2+).

The protein belongs to the 1-acyl-sn-glycerol-3-phosphate acyltransferase family.

The protein localises to the golgi apparatus membrane. The protein resides in the late endosome membrane. The enzyme catalyses a 1-acyl-sn-glycero-3-phosphoethanolamine + an acyl-CoA = a 1,2-diacyl-sn-glycero-3-phosphoethanolamine + CoA. It carries out the reaction a 1-acyl-sn-glycero-3-phosphocholine + an acyl-CoA = a 1,2-diacyl-sn-glycero-3-phosphocholine + CoA. The catalysed reaction is a 1-acyl-sn-glycero-3-phospho-L-serine + an acyl-CoA = a 1,2-diacyl-sn-glycero-3-phospho-L-serine + CoA. Its pathway is lipid metabolism; phospholipid metabolism. In terms of biological role, possesses acyl-CoA-dependent lysophospholipid acyltransferase activity with a subset of lysophospholipids as substrates. Exhibits strong acylation activity on lysophosphatidylethanolamine (LPE), and lower activity on lysophosphatidylcholine (LPC) and lysophosphatidylserine (LPS). Exhibits acylation activity on both LPE and LPC. Has a preference for 18:1-LPE over 16:0-LPE as acceptor. Palmitoyl-CoA (16:0-CoA) is a better acyl donor than oleoyl-CoA (18:1-CoA). Among several different acyl-CoA species the best acyl donor is eicosanoyl-CoA (20:0-CoA). Activity is calcium-independent. Its activity is essential for maintaining adequate levels of phosphatidylethanolamine (PE), LPE and LPC in the cells, which is crucial for plant growth regulation. This chain is Lysophospholipid acyltransferase LPEAT2, found in Arabidopsis thaliana (Mouse-ear cress).